A 62-amino-acid polypeptide reads, in one-letter code: Large ribosomal subunit protein bL32 (62 aa).

Residues 1 to 20 form a disordered region; the sequence is MAVPARHTSKQKKRSRRGHI. Basic residues predominate over residues 7-20; sequence HTSKQKKRSRRGHI.

The protein belongs to the bacterial ribosomal protein bL32 family.

The polypeptide is Large ribosomal subunit protein bL32 (Lactobacillus acidophilus (strain ATCC 700396 / NCK56 / N2 / NCFM)).